The chain runs to 87 residues: Small ribosomal subunit protein bS16 (87 aa).

The protein belongs to the bacterial ribosomal protein bS16 family.

In Psychrobacter sp. (strain PRwf-1), this protein is Small ribosomal subunit protein bS16.